The chain runs to 141 residues: ATP synthase epsilon chain (141 aa).

Belongs to the ATPase epsilon chain family. As to quaternary structure, F-type ATPases have 2 components, CF(1) - the catalytic core - and CF(0) - the membrane proton channel. CF(1) has five subunits: alpha(3), beta(3), gamma(1), delta(1), epsilon(1). CF(0) has three main subunits: a, b and c.

It is found in the cell inner membrane. Produces ATP from ADP in the presence of a proton gradient across the membrane. The polypeptide is ATP synthase epsilon chain (Halorhodospira halophila (strain DSM 244 / SL1) (Ectothiorhodospira halophila (strain DSM 244 / SL1))).